Here is a 188-residue protein sequence, read N- to C-terminus: Probable nicotinate-nucleotide adenylyltransferase (188 aa).

It belongs to the NadD family.

The enzyme catalyses nicotinate beta-D-ribonucleotide + ATP + H(+) = deamido-NAD(+) + diphosphate. It functions in the pathway cofactor biosynthesis; NAD(+) biosynthesis; deamido-NAD(+) from nicotinate D-ribonucleotide: step 1/1. In terms of biological role, catalyzes the reversible adenylation of nicotinate mononucleotide (NaMN) to nicotinic acid adenine dinucleotide (NaAD). The sequence is that of Probable nicotinate-nucleotide adenylyltransferase from Listeria monocytogenes serotype 4a (strain HCC23).